The primary structure comprises 259 residues: DNA utilization protein HofM (259 aa).

Required for the use of extracellular DNA as a nutrient. The polypeptide is DNA utilization protein HofM (hofM) (Escherichia coli (strain K12)).